Consider the following 379-residue polypeptide: MTNTRKSHPLIKIVNHSFIDLPAPSNISAWWNFGSLLGMCLGLQILTGLFLAMHYTADTTTAFSSVTHICRDVNYGWLIRYMHANGASMFFIFLYFHIGRGIYYGSYTFTDTWNMGVLLLLTTMATAFMGYVLPWGQMSFWGATVITNLLSAIPYIGPTLVEWIWGGFSVDKATLTRFFAFHFILPFIITAMVMIHLLFLHETGSNNPSGMNSDSDKIPFHPYYTIKDILGALFMIITLMSLVMFSPDLLGDPDNYAPANPLNTPPHIKPEWYFLFAYAILRSIPNKLGGVLALASSILILMLFPILHLSKQRSMSFRPLSQCLMWMLVTNLLILTWIGGQPVEYPFITIGQMASMTYFFTTLILMPLTALMENKLLKW.

The next 4 membrane-spanning stretches (helical) occupy residues 33–53 (FGSL…FLAM), 77–98 (WLIR…YFHI), 113–133 (WNMG…GYVL), and 178–198 (FFAF…IHLL). Histidine 83 and histidine 97 together coordinate heme b. The heme b site is built by histidine 182 and histidine 196. Histidine 201 provides a ligand contact to a ubiquinone. 4 helical membrane-spanning segments follow: residues 226 to 246 (IKDI…VMFS), 288 to 308 (LGGV…PILH), 320 to 340 (LSQC…WIGG), and 347 to 367 (FITI…ILMP).

This sequence belongs to the cytochrome b family. As to quaternary structure, the cytochrome bc1 complex contains 11 subunits: 3 respiratory subunits (MT-CYB, CYC1 and UQCRFS1), 2 core proteins (UQCRC1 and UQCRC2) and 6 low-molecular weight proteins (UQCRH/QCR6, UQCRB/QCR7, UQCRQ/QCR8, UQCR10/QCR9, UQCR11/QCR10 and a cleavage product of UQCRFS1). This cytochrome bc1 complex then forms a dimer. It depends on heme b as a cofactor.

The protein resides in the mitochondrion inner membrane. Functionally, component of the ubiquinol-cytochrome c reductase complex (complex III or cytochrome b-c1 complex) that is part of the mitochondrial respiratory chain. The b-c1 complex mediates electron transfer from ubiquinol to cytochrome c. Contributes to the generation of a proton gradient across the mitochondrial membrane that is then used for ATP synthesis. This chain is Cytochrome b (MT-CYB), found in Ctenomys leucodon (White-toothed tuco-tuco).